Here is a 1248-residue protein sequence, read N- to C-terminus: Cullin-associated NEDD8-dissociated protein 1 (1248 aa).

HEAT repeat units lie at residues 44 to 82, 127 to 165, 168 to 206, 365 to 403, 425 to 463, 510 to 548, 604 to 642, 644 to 682, 861 to 900, 976 to 1014, and 1054 to 1093; these read DESEKKVVRMVLKLLEDKNGEVQNLAVKCLGPLVNKVKE, PNVCQRITGKLSTAIEKEDVSVKLESLDILADLLSRFGE, VPFHSTILKALMPQLASSRQAVRKRTIVALSFLLIQANS, EDFYRSLSPALIARFKEREENVKSDIFHAYVALLKNTRL, IEQLPLIVKAIQPLMREKSMKTRQDCFLLLRELLNSLPG, HPHIPLLVPLVVTSVFDPFYKIATEALLVLQQLVKVIRP, QNELAVCLPIFMERLKNEVTRLSSVKALTLIAASSLRID, TPILHDVLPALGTFLRKNHRALKLHSLDLINKIVINYSS, DLSSIQVLPQTIIECFGATSEDVKAAASHALGAVSVGSLQ, LVNPDELLPQLQQALRSESATMRTVVVSSVKFTISDQPQ, and PSLVRDLLPTLLPWLYSETKVKSELIREVEMGPFKHTVDD.

The protein belongs to the CAND family.

Functionally, key assembly factor of SCF (SKP1-CUL1-F-box protein) E3 ubiquitin ligase complexes that promotes the exchange of the substrate-recognition F-box subunit in SCF complexes, thereby playing a key role in the cellular repertoire of SCF complexes. Acts as a F-box protein exchange factor. Probably plays a similar role in other cullin-RING E3 ubiquitin ligase complexes. The sequence is that of Cullin-associated NEDD8-dissociated protein 1 (Cand1) from Drosophila melanogaster (Fruit fly).